The chain runs to 278 residues: Leucine-rich repeat-containing protein 10 (278 aa).

LRR repeat units lie at residues 30–51, 52–74, 76–97, 98–121, 123–143, 144–166, 167–189, and 191–213; these read LDRM…VCSF, QELV…LGQL, NLQI…VCTL, KQLC…SLLQ, LRTL…VCEL, SLLK…LQRL, RELR…LLHM, and FLEI…HLSS. A compositionally biased stretch (basic and acidic residues) spans 239–250; it reads RWAEETPEPDPR. The segment at 239–278 is disordered; that stretch reads RWAEETPEPDPRKARRYALAREESQEAQLPALPPLPPTNS. Residues 269-278 are compositionally biased toward pro residues; that stretch reads ALPPLPPTNS.

The protein localises to the nucleus. Functionally, may play important roles in cardiac development and/or cardiac function. This chain is Leucine-rich repeat-containing protein 10 (LRRC10), found in Bos taurus (Bovine).